Consider the following 160-residue polypeptide: Ureidoglycolate lyase (160 aa).

This sequence belongs to the ureidoglycolate lyase family. Homodimer. The cofactor is Ni(2+).

It carries out the reaction (S)-ureidoglycolate = urea + glyoxylate. It functions in the pathway nitrogen metabolism; (S)-allantoin degradation. Catalyzes the catabolism of the allantoin degradation intermediate (S)-ureidoglycolate, generating urea and glyoxylate. Involved in the utilization of allantoin as nitrogen source. This Salmonella gallinarum (strain 287/91 / NCTC 13346) protein is Ureidoglycolate lyase.